A 75-amino-acid polypeptide reads, in one-letter code: MPRPKPDDRSDNVEKLQDMVQNTIENIEKAEETMQFASPEERERIREKNRRREEAIAAMRAEIKDEAAAREHGYQ.

This sequence belongs to the Tlp family.

Its subcellular location is the spore core. The protein is Small, acid-soluble spore protein Tlp of Geobacillus thermodenitrificans (strain NG80-2).